We begin with the raw amino-acid sequence, 206 residues long: ATP-dependent Clp protease proteolytic subunit (206 aa).

The active-site Nucleophile is the S110. The active site involves H135.

This sequence belongs to the peptidase S14 family. As to quaternary structure, fourteen ClpP subunits assemble into 2 heptameric rings which stack back to back to give a disk-like structure with a central cavity, resembling the structure of eukaryotic proteasomes.

It is found in the cytoplasm. It catalyses the reaction Hydrolysis of proteins to small peptides in the presence of ATP and magnesium. alpha-casein is the usual test substrate. In the absence of ATP, only oligopeptides shorter than five residues are hydrolyzed (such as succinyl-Leu-Tyr-|-NHMec, and Leu-Tyr-Leu-|-Tyr-Trp, in which cleavage of the -Tyr-|-Leu- and -Tyr-|-Trp bonds also occurs).. Its function is as follows. Cleaves peptides in various proteins in a process that requires ATP hydrolysis. Has a chymotrypsin-like activity. Plays a major role in the degradation of misfolded proteins. This Edwardsiella ictaluri (strain 93-146) protein is ATP-dependent Clp protease proteolytic subunit.